The following is a 366-amino-acid chain: Chorismate synthase (366 aa).

NADP(+) is bound by residues Arg48 and Arg54. FMN-binding positions include 125 to 127 (RSS), 238 to 239 (NA), Gly278, 293 to 297 (KPTSS), and Arg319.

This sequence belongs to the chorismate synthase family. As to quaternary structure, homotetramer. FMNH2 is required as a cofactor.

The catalysed reaction is 5-O-(1-carboxyvinyl)-3-phosphoshikimate = chorismate + phosphate. It participates in metabolic intermediate biosynthesis; chorismate biosynthesis; chorismate from D-erythrose 4-phosphate and phosphoenolpyruvate: step 7/7. Catalyzes the anti-1,4-elimination of the C-3 phosphate and the C-6 proR hydrogen from 5-enolpyruvylshikimate-3-phosphate (EPSP) to yield chorismate, which is the branch point compound that serves as the starting substrate for the three terminal pathways of aromatic amino acid biosynthesis. This reaction introduces a second double bond into the aromatic ring system. The chain is Chorismate synthase from Herminiimonas arsenicoxydans.